A 146-amino-acid polypeptide reads, in one-letter code: uncharacterized protein (146 aa).

Residues aspartate 67 to valine 93 are disordered. A compositionally biased stretch (low complexity) spans serine 77–proline 92.

This is an uncharacterized protein from Caenorhabditis elegans.